The following is a 332-amino-acid chain: Holliday junction branch migration complex subunit RuvB (332 aa).

The tract at residues 1–181 (MSRILDNEQM…FGITGHMEYY (181 aa)) is large ATPase domain (RuvB-L). ATP is bound by residues Leu-20, Arg-21, Gly-62, Lys-65, Thr-66, Thr-67, 128–130 (EDF), Arg-171, Tyr-181, and Arg-218. Thr-66 serves as a coordination point for Mg(2+). Positions 182–252 (EEADLTEIVE…ITDQALSMLD (71 aa)) are small ATPAse domain (RuvB-S). The tract at residues 255–332 (HEGLDYVDQK…EHLGYEYMEK (78 aa)) is head domain (RuvB-H). DNA contacts are provided by Arg-291, Arg-310, Arg-312, and Arg-315.

This sequence belongs to the RuvB family. In terms of assembly, homohexamer. Forms an RuvA(8)-RuvB(12)-Holliday junction (HJ) complex. HJ DNA is sandwiched between 2 RuvA tetramers; dsDNA enters through RuvA and exits via RuvB. An RuvB hexamer assembles on each DNA strand where it exits the tetramer. Each RuvB hexamer is contacted by two RuvA subunits (via domain III) on 2 adjacent RuvB subunits; this complex drives branch migration. In the full resolvosome a probable DNA-RuvA(4)-RuvB(12)-RuvC(2) complex forms which resolves the HJ.

It is found in the cytoplasm. It carries out the reaction ATP + H2O = ADP + phosphate + H(+). The RuvA-RuvB-RuvC complex processes Holliday junction (HJ) DNA during genetic recombination and DNA repair, while the RuvA-RuvB complex plays an important role in the rescue of blocked DNA replication forks via replication fork reversal (RFR). RuvA specifically binds to HJ cruciform DNA, conferring on it an open structure. The RuvB hexamer acts as an ATP-dependent pump, pulling dsDNA into and through the RuvAB complex. RuvB forms 2 homohexamers on either side of HJ DNA bound by 1 or 2 RuvA tetramers; 4 subunits per hexamer contact DNA at a time. Coordinated motions by a converter formed by DNA-disengaged RuvB subunits stimulates ATP hydrolysis and nucleotide exchange. Immobilization of the converter enables RuvB to convert the ATP-contained energy into a lever motion, pulling 2 nucleotides of DNA out of the RuvA tetramer per ATP hydrolyzed, thus driving DNA branch migration. The RuvB motors rotate together with the DNA substrate, which together with the progressing nucleotide cycle form the mechanistic basis for DNA recombination by continuous HJ branch migration. Branch migration allows RuvC to scan DNA until it finds its consensus sequence, where it cleaves and resolves cruciform DNA. The chain is Holliday junction branch migration complex subunit RuvB from Streptococcus gordonii (strain Challis / ATCC 35105 / BCRC 15272 / CH1 / DL1 / V288).